Here is a 100-residue protein sequence, read N- to C-terminus: Osteocalcin (100 aa).

A signal peptide spans Met-1–Ala-23. Residues Lys-24–Arg-51 constitute a propeptide that is removed on maturation. Positions Tyr-52–Gly-98 constitute a Gla domain. Pro-60 carries the post-translational modification 4-hydroxyproline. Ca(2+) is bound by residues Glu-68, Glu-72, Glu-75, and Asp-81. 4-carboxyglutamate is present on residues Glu-68, Glu-72, and Glu-75. An intrachain disulfide couples Cys-74 to Cys-80.

The protein belongs to the osteocalcin/matrix Gla protein family. In terms of processing, gamma-carboxyglutamate residues are formed by vitamin K dependent carboxylation by GGCX. These residues are essential for the binding of calcium. Decarboxylation promotes the hormone activity.

The protein localises to the secreted. The carboxylated form is one of the main organic components of the bone matrix, which constitutes 1-2% of the total bone protein: it acts as a negative regulator of bone formation and is required to limit bone formation without impairing bone resorption or mineralization. The carboxylated form binds strongly to apatite and calcium. Its function is as follows. The uncarboxylated form acts as a hormone secreted by osteoblasts, which regulates different cellular processes, such as energy metabolism, male fertility and brain development. Regulates of energy metabolism by acting as a hormone favoring pancreatic beta-cell proliferation, insulin secretion and sensitivity and energy expenditure. Uncarboxylated osteocalcin hormone also promotes testosterone production in the testes: acts as a ligand for G protein-coupled receptor GPRC6A at the surface of Leydig cells, initiating a signaling response that promotes the expression of enzymes required for testosterone synthesis in a CREB-dependent manner. Also acts as a regulator of brain development: osteocalcin hormone crosses the blood-brain barrier and acts as a ligand for GPR158 on neurons, initiating a signaling response that prevents neuronal apoptosis in the hippocampus, favors the synthesis of all monoamine neurotransmitters and inhibits that of gamma-aminobutyric acid (GABA). Osteocalcin also crosses the placenta during pregnancy and maternal osteocalcin is required for fetal brain development. The polypeptide is Osteocalcin (BGLAP) (Macaca mulatta (Rhesus macaque)).